Here is a 334-residue protein sequence, read N- to C-terminus: Glycerol-3-phosphate dehydrogenase [NAD(P)+] (334 aa).

The NADPH site is built by tryptophan 13, arginine 33, and lysine 106. Residues lysine 106, glycine 137, and serine 139 each contribute to the sn-glycerol 3-phosphate site. Alanine 141 provides a ligand contact to NADPH. 5 residues coordinate sn-glycerol 3-phosphate: lysine 192, aspartate 245, serine 255, arginine 256, and asparagine 257. Lysine 192 acts as the Proton acceptor in catalysis. Arginine 256 is a binding site for NADPH. Residues valine 280 and glutamate 282 each coordinate NADPH.

This sequence belongs to the NAD-dependent glycerol-3-phosphate dehydrogenase family.

The protein localises to the cytoplasm. It catalyses the reaction sn-glycerol 3-phosphate + NAD(+) = dihydroxyacetone phosphate + NADH + H(+). It carries out the reaction sn-glycerol 3-phosphate + NADP(+) = dihydroxyacetone phosphate + NADPH + H(+). It functions in the pathway membrane lipid metabolism; glycerophospholipid metabolism. Catalyzes the reduction of the glycolytic intermediate dihydroxyacetone phosphate (DHAP) to sn-glycerol 3-phosphate (G3P), the key precursor for phospholipid synthesis. The sequence is that of Glycerol-3-phosphate dehydrogenase [NAD(P)+] from Chlamydia muridarum (strain MoPn / Nigg).